Consider the following 364-residue polypeptide: Mannose-1-phosphate guanyltransferase (364 aa).

It belongs to the transferase hexapeptide repeat family.

It localises to the cytoplasm. The catalysed reaction is alpha-D-mannose 1-phosphate + GTP + H(+) = GDP-alpha-D-mannose + diphosphate. The protein operates within nucleotide-sugar biosynthesis; GDP-alpha-D-mannose biosynthesis; GDP-alpha-D-mannose from alpha-D-mannose 1-phosphate (GTP route): step 1/1. Its function is as follows. Involved in cell wall synthesis where it is required for glycosylation. Involved in cell cycle progression through cell-size checkpoint. The sequence is that of Mannose-1-phosphate guanyltransferase (mpg-1) from Neurospora crassa (strain ATCC 24698 / 74-OR23-1A / CBS 708.71 / DSM 1257 / FGSC 987).